Here is a 602-residue protein sequence, read N- to C-terminus: ATP-dependent zinc metalloprotease FtsH 3 (602 aa).

Residues 1-18 are Cytoplasmic-facing; that stretch reads MNSWFLQVSKRLGPAGRR. The chain crosses the membrane as a helical span at residues 19-39; sequence LWLLGFMGVVLAVTLGLALRA. The Periplasmic portion of the chain corresponds to 40 to 117; that stretch reads ARESATQRTA…DFASREDPSR (78 aa). A helical membrane pass occupies residues 118–138; the sequence is AASAVLPVVVLAAVGFALFTV. The Cytoplasmic segment spans residues 139-602; that stretch reads SRRRSPKVFS…RRPRPEDQAA (464 aa). 202–209 is an ATP binding site; that stretch reads GEPGTGKT. Residue histidine 425 coordinates Zn(2+). Glutamate 426 is a catalytic residue. Histidine 429 and aspartate 501 together coordinate Zn(2+).

In the central section; belongs to the AAA ATPase family. The protein in the C-terminal section; belongs to the peptidase M41 family. Homohexamer. Zn(2+) is required as a cofactor.

The protein resides in the cell inner membrane. Functionally, acts as a processive, ATP-dependent zinc metallopeptidase for both cytoplasmic and membrane proteins. Plays a role in the quality control of integral membrane proteins. The sequence is that of ATP-dependent zinc metalloprotease FtsH 3 from Sorangium cellulosum (strain So ce56) (Polyangium cellulosum (strain So ce56)).